The primary structure comprises 509 residues: Maturase K (509 aa).

Belongs to the intron maturase 2 family. MatK subfamily.

It is found in the plastid. Its subcellular location is the chloroplast. Its function is as follows. Usually encoded in the trnK tRNA gene intron. Probably assists in splicing its own and other chloroplast group II introns. This Arpophyllum giganteum (Hyacinth orchid) protein is Maturase K.